Here is a 277-residue protein sequence, read N- to C-terminus: 2-dehydro-3-deoxyphosphooctonate aldolase (277 aa).

Belongs to the KdsA family.

It localises to the cytoplasm. The enzyme catalyses D-arabinose 5-phosphate + phosphoenolpyruvate + H2O = 3-deoxy-alpha-D-manno-2-octulosonate-8-phosphate + phosphate. Its pathway is carbohydrate biosynthesis; 3-deoxy-D-manno-octulosonate biosynthesis; 3-deoxy-D-manno-octulosonate from D-ribulose 5-phosphate: step 2/3. It participates in bacterial outer membrane biogenesis; lipopolysaccharide biosynthesis. The protein is 2-dehydro-3-deoxyphosphooctonate aldolase of Hydrogenovibrio crunogenus (strain DSM 25203 / XCL-2) (Thiomicrospira crunogena).